A 177-amino-acid polypeptide reads, in one-letter code: Shikimate kinase (177 aa).

An ATP-binding site is contributed by 17 to 22 (GVGKTT). Thr21 is a binding site for Mg(2+). Asp39, Arg63, and Gly86 together coordinate substrate. Arg125 is a binding site for ATP. Substrate is bound at residue Arg143. Arg159 is an ATP binding site.

The protein belongs to the shikimate kinase family. In terms of assembly, monomer. Mg(2+) serves as cofactor.

The protein localises to the cytoplasm. It catalyses the reaction shikimate + ATP = 3-phosphoshikimate + ADP + H(+). Its pathway is metabolic intermediate biosynthesis; chorismate biosynthesis; chorismate from D-erythrose 4-phosphate and phosphoenolpyruvate: step 5/7. Its function is as follows. Catalyzes the specific phosphorylation of the 3-hydroxyl group of shikimic acid using ATP as a cosubstrate. The polypeptide is Shikimate kinase (Bacillus licheniformis (strain ATCC 14580 / DSM 13 / JCM 2505 / CCUG 7422 / NBRC 12200 / NCIMB 9375 / NCTC 10341 / NRRL NRS-1264 / Gibson 46)).